Consider the following 638-residue polypeptide: DNA gyrase subunit B (638 aa).

One can recognise a Toprim domain in the interval 431–545 (RELFIVEGNS…YGFVYIAQPP (115 aa)). Mg(2+) contacts are provided by Glu437, Asp510, and Asp512.

Belongs to the type II topoisomerase GyrB family. As to quaternary structure, heterotetramer, composed of two GyrA and two GyrB chains. In the heterotetramer, GyrA contains the active site tyrosine that forms a transient covalent intermediate with DNA, while GyrB binds cofactors and catalyzes ATP hydrolysis. It depends on Mg(2+) as a cofactor. Mn(2+) serves as cofactor. Ca(2+) is required as a cofactor.

It is found in the cytoplasm. The catalysed reaction is ATP-dependent breakage, passage and rejoining of double-stranded DNA.. In terms of biological role, a type II topoisomerase that negatively supercoils closed circular double-stranded (ds) DNA in an ATP-dependent manner to modulate DNA topology and maintain chromosomes in an underwound state. Negative supercoiling favors strand separation, and DNA replication, transcription, recombination and repair, all of which involve strand separation. Also able to catalyze the interconversion of other topological isomers of dsDNA rings, including catenanes and knotted rings. Type II topoisomerases break and join 2 DNA strands simultaneously in an ATP-dependent manner. The chain is DNA gyrase subunit B from Metamycoplasma arthritidis (Mycoplasma arthritidis).